We begin with the raw amino-acid sequence, 166 residues long: 16S rRNA aminocarboxypropyltransferase (166 aa).

5 residues coordinate S-adenosyl-L-methionine: Thr17, Val62, Ile84, Tyr99, and Ser103.

It belongs to the TDD superfamily. TSR3 family.

Its subcellular location is the cytoplasm. It carries out the reaction an N(1)-methylpseudouridine in rRNA + S-adenosyl-L-methionine = N(1)-methyl-N(3)-[(3S)-3-amino-3-carboxypropyl]pseudouridine in rRNA + S-methyl-5'-thioadenosine + H(+). In terms of biological role, aminocarboxypropyltransferase that catalyzes the aminocarboxypropyl transfer on pseudouridine corresponding to position 914 in M.jannaschii 16S rRNA. It constitutes the last step in biosynthesis of the hypermodified N1-methyl-N3-(3-amino-3-carboxypropyl) pseudouridine (m1acp3-Psi). This chain is 16S rRNA aminocarboxypropyltransferase, found in Saccharolobus solfataricus (strain ATCC 35092 / DSM 1617 / JCM 11322 / P2) (Sulfolobus solfataricus).